Consider the following 400-residue polypeptide: MEKMTTLKSFESKGILTSTPIRGAGDGMETEEPPKSVEVTHGVQPINQHVLPSPRKKVPSDSPGVLQLGKILNEKTVEVEAVRIFVPKAAITHDIPTKSAKVKSLGHHREELHNQSEVVTDPRKELSEVKKVLEKLKNSERRLLQDKEGLSNQLRVQTEVNRELKKLLVASVGDDPQYHFERLAREKNQLILENEALGRNTAQLSEQLERMSIQCDVWRSKFLASRVMADELTNFRVVLQHQNRDAQSAIQDLLSEREQFRQEMISTQKFLEELLVSLQWGREQTYSPNTQPHSTADLALTNHRLAEAVHAHLLGNVGISHPKRTPATAEVCSTPAEKMAEKVLRILDPVACTESSPDNAFAESTLLTTKKNIGRFHPYTRYENITFNCCSHCQGELLAL.

The disordered stretch occupies residues 1-36; the sequence is MEKMTTLKSFESKGILTSTPIRGAGDGMETEEPPKS. The Tankyrase-binding motif motif lies at 22 to 26; the sequence is RGAGD. Position 53 is a phosphoserine (serine 53). Residues 126–263 adopt a coiled-coil conformation; the sequence is LSEVKKVLEK…LSEREQFRQE (138 aa). Serine 356 carries the post-translational modification Phosphoserine. The interval 394–400 is essential for interaction with GORASP2; sequence QGELLAL.

Interacts with GORASP2. Interacts with the GTP-bound form of RAB2, but not with other Golgi Rab proteins. Identified in a complex with RAB2 and GORASP2. In terms of processing, ADP-ribosylated by tankyrase TNKS and TNKS2. Poly-ADP-ribosylated protein is recognized by RNF146, followed by ubiquitination. Ubiquitinated by RNF146 when poly-ADP-ribosylated, leading to its degradation.

It localises to the golgi apparatus membrane. Required for normal Golgi structure and for protein transport from the endoplasmic reticulum (ER) through the Golgi apparatus to the cell surface. The chain is Golgin-45 from Rattus norvegicus (Rat).